The following is a 335-amino-acid chain: MNIKDIARLSGVGVSTVSRVINNHPDVKQSTREKVLQIIKDSNYIPNNSARILKQNNTKNIGVLVKGVFNPFFSEMTNIIGNIIEENGYTMILQQNDFNLYQDVETMIGFVKEKRLQGVICLGGNFTEIQEDSFEDIKVPVVLTSVNTISKKGKKYYSSVGIDNSKSAYKAVRYLIERVIKDCFGLGEVNDLGVSWWRLDGYKKALGENNIDIDDELIISGEYNSGTAYENVNKLLKKRKDITAIFALSDIMALGAIKAAIDNGLDVPRDISIVGFDGMDESKYYNPSITTVKQPKKKMAETSVELLFSLITTDGENKHVILDTELVERDSCFNI.

An HTH lacI-type domain is found at 1 to 55 (MNIKDIARLSGVGVSTVSRVINNHPDVKQSTREKVLQIIKDSNYIPNNSARILKQ). Positions 3 to 22 (IKDIARLSGVGVSTVSRVIN) form a DNA-binding region, H-T-H motif.

Repressor of glucanotransferase gene expression. The protein is HTH-type transcriptional regulator MalR of Clostridium butyricum.